The primary structure comprises 356 residues: Histidinol-phosphate aminotransferase (356 aa).

Lys214 is subject to N6-(pyridoxal phosphate)lysine.

This sequence belongs to the class-II pyridoxal-phosphate-dependent aminotransferase family. Histidinol-phosphate aminotransferase subfamily. Homodimer. Pyridoxal 5'-phosphate serves as cofactor.

It carries out the reaction L-histidinol phosphate + 2-oxoglutarate = 3-(imidazol-4-yl)-2-oxopropyl phosphate + L-glutamate. It participates in amino-acid biosynthesis; L-histidine biosynthesis; L-histidine from 5-phospho-alpha-D-ribose 1-diphosphate: step 7/9. The protein is Histidinol-phosphate aminotransferase of Escherichia coli O81 (strain ED1a).